We begin with the raw amino-acid sequence, 194 residues long: NADH-quinone oxidoreductase subunit B 1 (194 aa).

The segment covering 1–12 (MGVTPVSNQPLV) has biased composition (polar residues). Positions 1–23 (MGVTPVSNQPLVAQQPKGIIDPS) are disordered. 4 residues coordinate [4Fe-4S] cluster: cysteine 73, cysteine 74, cysteine 138, and cysteine 168.

It belongs to the complex I 20 kDa subunit family. NDH-1 is composed of 14 different subunits. Subunits NuoB, C, D, E, F, and G constitute the peripheral sector of the complex. The cofactor is [4Fe-4S] cluster.

It is found in the cell inner membrane. The enzyme catalyses a quinone + NADH + 5 H(+)(in) = a quinol + NAD(+) + 4 H(+)(out). Functionally, NDH-1 shuttles electrons from NADH, via FMN and iron-sulfur (Fe-S) centers, to quinones in the respiratory chain. The immediate electron acceptor for the enzyme in this species is believed to be ubiquinone. Couples the redox reaction to proton translocation (for every two electrons transferred, four hydrogen ions are translocated across the cytoplasmic membrane), and thus conserves the redox energy in a proton gradient. The polypeptide is NADH-quinone oxidoreductase subunit B 1 (Rhizobium etli (strain ATCC 51251 / DSM 11541 / JCM 21823 / NBRC 15573 / CFN 42)).